The chain runs to 422 residues: Ameloblastin (422 aa).

The signal sequence occupies residues 1–26; the sequence is MSASKIPLFKMKGLLLFLSLVKMSLA. Pro42 is subject to Hydroxyproline. Residue Ser48 is modified to Phosphoserine. Residue Ser117 is glycosylated (O-linked (GalNAc...) serine). Residues 271 to 321 form a disordered region; it reads GLNQNSPKGGDFTVEVDSPVSVTKGPEKGEGPEGSPLQEASPDKGENPALL.

This sequence belongs to the ameloblastin family. As to expression, ameloblast-specific.

Its subcellular location is the secreted. It localises to the extracellular space. It is found in the extracellular matrix. In terms of biological role, involved in the mineralization and structural organization of enamel. This Rattus norvegicus (Rat) protein is Ameloblastin (Ambn).